The chain runs to 260 residues: Putative hydro-lyase Dshi_0610 (260 aa).

It belongs to the D-glutamate cyclase family.

The protein is Putative hydro-lyase Dshi_0610 of Dinoroseobacter shibae (strain DSM 16493 / NCIMB 14021 / DFL 12).